Here is a 173-residue protein sequence, read N- to C-terminus: NADH-quinone oxidoreductase subunit B 2 (173 aa).

Cys-42, Cys-43, Cys-107, and Cys-137 together coordinate [4Fe-4S] cluster.

This sequence belongs to the complex I 20 kDa subunit family. NDH-1 is composed of 14 different subunits. Subunits NuoB, C, D, E, F, and G constitute the peripheral sector of the complex. [4Fe-4S] cluster is required as a cofactor.

Its subcellular location is the cell inner membrane. It catalyses the reaction a quinone + NADH + 5 H(+)(in) = a quinol + NAD(+) + 4 H(+)(out). Its function is as follows. NDH-1 shuttles electrons from NADH, via FMN and iron-sulfur (Fe-S) centers, to quinones in the respiratory chain. Couples the redox reaction to proton translocation (for every two electrons transferred, four hydrogen ions are translocated across the cytoplasmic membrane), and thus conserves the redox energy in a proton gradient. This chain is NADH-quinone oxidoreductase subunit B 2, found in Anaeromyxobacter dehalogenans (strain 2CP-C).